A 228-amino-acid chain; its full sequence is Probable calcium-binding protein CML48 (228 aa).

2 consecutive EF-hand domains span residues 52–87 (ETHP…SGYD) and 121–156 (NCLA…LGCV). Residues Asp65, Asn67, Ser69, and Glu76 each coordinate Ca(2+).

Potential calcium sensor. The sequence is that of Probable calcium-binding protein CML48 (CML48) from Arabidopsis thaliana (Mouse-ear cress).